Here is an 879-residue protein sequence, read N- to C-terminus: Bifunctional uridylyltransferase/uridylyl-removing enzyme (879 aa).

Residues 1–340 (MANVQEDKDF…GTQDLQHAEH (340 aa)) form a uridylyltransferase region. The tract at residues 341-700 (ISDDFAVANK…IGDENNYGTT (360 aa)) is uridylyl-removing. In terms of domain architecture, HD spans 458-580 (VDEHTFRLVR…VSTPERLDYL (123 aa)). ACT domains are found at residues 701–782 (ELFI…STKR) and 809–879 (TFEL…DLEF).

Belongs to the GlnD family. Mg(2+) is required as a cofactor.

It catalyses the reaction [protein-PII]-L-tyrosine + UTP = [protein-PII]-uridylyl-L-tyrosine + diphosphate. It carries out the reaction [protein-PII]-uridylyl-L-tyrosine + H2O = [protein-PII]-L-tyrosine + UMP + H(+). With respect to regulation, uridylyltransferase (UTase) activity is inhibited by glutamine, while glutamine activates uridylyl-removing (UR) activity. In terms of biological role, modifies, by uridylylation and deuridylylation, the PII regulatory proteins (GlnB and homologs), in response to the nitrogen status of the cell that GlnD senses through the glutamine level. Under low glutamine levels, catalyzes the conversion of the PII proteins and UTP to PII-UMP and PPi, while under higher glutamine levels, GlnD hydrolyzes PII-UMP to PII and UMP (deuridylylation). Thus, controls uridylylation state and activity of the PII proteins, and plays an important role in the regulation of nitrogen assimilation and metabolism. The sequence is that of Bifunctional uridylyltransferase/uridylyl-removing enzyme from Idiomarina loihiensis (strain ATCC BAA-735 / DSM 15497 / L2-TR).